Here is a 161-residue protein sequence, read N- to C-terminus: Phosphopantetheine adenylyltransferase (161 aa).

Serine 11 is a binding site for substrate. ATP is bound by residues 11–12 and histidine 19; that span reads SF. Residues lysine 43, leucine 75, and arginine 89 each coordinate substrate. Residues 90–92, glutamate 100, and 125–131 each bind ATP; these read GLR and YSYLSSS.

It belongs to the bacterial CoaD family. As to quaternary structure, homohexamer. Mg(2+) is required as a cofactor.

The protein localises to the cytoplasm. It carries out the reaction (R)-4'-phosphopantetheine + ATP + H(+) = 3'-dephospho-CoA + diphosphate. It functions in the pathway cofactor biosynthesis; coenzyme A biosynthesis; CoA from (R)-pantothenate: step 4/5. Its function is as follows. Reversibly transfers an adenylyl group from ATP to 4'-phosphopantetheine, yielding dephospho-CoA (dPCoA) and pyrophosphate. The chain is Phosphopantetheine adenylyltransferase from Geobacter sp. (strain M21).